Here is a 249-residue protein sequence, read N- to C-terminus: Putative S-adenosyl-L-methionine-dependent methyltransferase Mjls_0570 (249 aa).

S-adenosyl-L-methionine is bound by residues Asp111 and 141-142 (DL).

The protein belongs to the UPF0677 family.

Functionally, exhibits S-adenosyl-L-methionine-dependent methyltransferase activity. This is Putative S-adenosyl-L-methionine-dependent methyltransferase Mjls_0570 from Mycobacterium sp. (strain JLS).